Here is a 322-residue protein sequence, read N- to C-terminus: Phosphoserine phosphatase (322 aa).

A substrate-binding site is contributed by 10 to 12 (PED). Positions 12, 116, and 118 each coordinate Mg(2+). Asp-116 serves as the catalytic Nucleophile. The active-site Proton donor is Asp-118. Substrate is bound by residues Glu-125, Arg-161, 204 to 205 (SG), and Lys-249. Asp-272 is a binding site for Mg(2+). Residue Asn-275 coordinates substrate.

This sequence belongs to the HAD-like hydrolase superfamily. SerB family. Requires Mg(2+) as cofactor.

It carries out the reaction O-phospho-L-serine + H2O = L-serine + phosphate. The enzyme catalyses O-phospho-D-serine + H2O = D-serine + phosphate. Its pathway is amino-acid biosynthesis; L-serine biosynthesis; L-serine from 3-phospho-D-glycerate: step 3/3. In terms of biological role, catalyzes the dephosphorylation of phosphoserine (P-Ser). This is Phosphoserine phosphatase (serB) from Escherichia coli O157:H7.